A 59-amino-acid polypeptide reads, in one-letter code: Protein B3 (59 aa).

This Homo sapiens (Human) protein is Protein B3 (B3).